Consider the following 280-residue polypeptide: C-type lectin domain family 1 member A (280 aa).

The interval 1-44 (MQAKYSSTRDMLDDDGDTTMSLHSQGSATTRHPEPRRTEHRAPS) is disordered. Residues 1-52 (MQAKYSSTRDMLDDDGDTTMSLHSQGSATTRHPEPRRTEHRAPSSTWRPVAL) are Cytoplasmic-facing. Residues 18-30 (TTMSLHSQGSATT) are compositionally biased toward polar residues. Basic and acidic residues predominate over residues 31–42 (RHPEPRRTEHRA). Residues 53–73 (TLLTLCLVLLIGLAALGLLFF) form a helical; Signal-anchor for type II membrane protein membrane-spanning segment. At 74-280 (QYYQLSNTGQ…VPPETLGEGD (207 aa)) the chain is on the extracellular side. Asn-95 and Asn-169 each carry an N-linked (GlcNAc...) asparagine glycan. The 115-residue stretch at 144-258 (HGDNCYQFYK…CKELKRCVCE (115 aa)) folds into the C-type lectin domain. 2 disulfide bridges follow: Cys-165/Cys-257 and Cys-236/Cys-249.

As to expression, expressed preferentially in dendritic cells.

It is found in the membrane. The sequence is that of C-type lectin domain family 1 member A (CLEC1A) from Homo sapiens (Human).